The primary structure comprises 537 residues: Cytoplasmic 60S subunit biogenesis factor REI1 homolog (537 aa).

2 C2H2-type zinc fingers span residues 18-42 (YTCN…SDWH) and 83-107 (KTCE…STKH). Disordered stretches follow at residues 101–151 (HLSS…AEEE) and 163–204 (SIHD…PEAL). Low complexity predominate over residues 192–204 (EETPTTTPKPEAL). A C2H2-type 3 zinc finger spans residues 260–284 (NECLTCGKMKVNVFAIQTHMRDKSH). A compositionally biased stretch (acidic residues) spans 312 to 322 (DWETEEEDKGE). 2 disordered regions span residues 312–361 (DWET…ASSL) and 382–401 (GKHP…ADGI). Residues 323-339 (EDGGVRLGAKRESKVVD) are compositionally biased toward basic and acidic residues. Residues 340 to 356 (ENGDEVMEDEEGWETDS) are compositionally biased toward acidic residues. Positions 383–395 (KHPHHSRENKKAH) are enriched in basic residues.

Belongs to the REI1 family. Associates with nascent pre-60S particles that have not yet entered the translating pool, and is released from mature 60S subunits.

Its subcellular location is the cytoplasm. Its function is as follows. Pre-60S-associated factor involved in the cytoplasmic maturation of the 60S subunit. Involved in the dissociation and recycling of other late pre-60S factors before newly synthesized large ribosomal subunits enter translation. In Chaetomium thermophilum (strain DSM 1495 / CBS 144.50 / IMI 039719) (Thermochaetoides thermophila), this protein is Cytoplasmic 60S subunit biogenesis factor REI1 homolog.